Reading from the N-terminus, the 294-residue chain is Ribosomal protein L11 methyltransferase (294 aa).

Residues Thr147, Gly169, Asp191, and Asn231 each coordinate S-adenosyl-L-methionine.

It belongs to the methyltransferase superfamily. PrmA family.

The protein localises to the cytoplasm. The catalysed reaction is L-lysyl-[protein] + 3 S-adenosyl-L-methionine = N(6),N(6),N(6)-trimethyl-L-lysyl-[protein] + 3 S-adenosyl-L-homocysteine + 3 H(+). Its function is as follows. Methylates ribosomal protein L11. In Dichelobacter nodosus (strain VCS1703A), this protein is Ribosomal protein L11 methyltransferase.